The primary structure comprises 266 residues: Energy-coupling factor transporter transmembrane protein EcfT (266 aa).

5 helical membrane-spanning segments follow: residues 32-52 (IIVV…AFTV), 71-91 (PLLW…PAGG), 107-127 (LINA…STLL), 152-172 (VPVD…PTLM), and 246-266 (DTVT…FRHW).

It belongs to the energy-coupling factor EcfT family. Forms a stable energy-coupling factor (ECF) transporter complex composed of 2 membrane-embedded substrate-binding proteins (S component), 2 ATP-binding proteins (A component) and 2 transmembrane proteins (T component). May be able to interact with more than 1 S component at a time.

Its subcellular location is the cell membrane. In terms of biological role, transmembrane (T) component of an energy-coupling factor (ECF) ABC-transporter complex. Unlike classic ABC transporters this ECF transporter provides the energy necessary to transport a number of different substrates. In Levilactobacillus brevis (strain ATCC 367 / BCRC 12310 / CIP 105137 / JCM 1170 / LMG 11437 / NCIMB 947 / NCTC 947) (Lactobacillus brevis), this protein is Energy-coupling factor transporter transmembrane protein EcfT.